The primary structure comprises 311 residues: MSTTLPDIAVTEPSALHAPLRWVGMQDIAIPVRLDEAEPSGTVAARAQVQVDLPRPELKGIHMSRLYRLLDRHLEQPLSPAMLSQLLQAMIDSHADCGSRAARVSLAFEVMLRMPALRSEGLAGWRAYPVRIDAQSRAGRSEMRLQIDVLYASTCPCSAALSRQLLSKAFAQQHAGQTALRVEDVAQWLQRNGSYATPHSQRSVAQVRVDLVARVQSFDIRALVLLCESALATPVQAAVRRIDEQAFARLNGANLMYVEDAARRLRKELAERYASFHVAVRHFESLHAHDAVAETGSDADVFHMIAESHGQ.

This sequence belongs to the GTP cyclohydrolase IV family.

It carries out the reaction GTP + H2O = 7,8-dihydroneopterin 3'-triphosphate + formate + H(+). It functions in the pathway cofactor biosynthesis; 7,8-dihydroneopterin triphosphate biosynthesis; 7,8-dihydroneopterin triphosphate from GTP: step 1/1. Converts GTP to 7,8-dihydroneopterin triphosphate. The protein is GTP cyclohydrolase FolE2 of Xanthomonas campestris pv. campestris (strain 8004).